Consider the following 212-residue polypeptide: MSSARRRALGFSFQALLLCAAGWHGAAQADGVSALRDFVQNVQSGRATFNQTVTSPDGAKKKTSTGSFEFLRPNRFRFDYTKPYEQQIVADGVKVWLHDVDLNQVTVRPFDQALGSTPAALLAGASIERDFTLANLPEEAGLQWVQALPKAREGSIRSLRVAFRGKDLAAFEITDAFGQRSRLDFNRFEGNAAVPAARFKFVAPAGADVLQQ.

Residues 1-29 (MSSARRRALGFSFQALLLCAAGWHGAAQA) form the signal peptide.

Belongs to the LolA family. Monomer.

The protein localises to the periplasm. Participates in the translocation of lipoproteins from the inner membrane to the outer membrane. Only forms a complex with a lipoprotein if the residue after the N-terminal Cys is not an aspartate (The Asp acts as a targeting signal to indicate that the lipoprotein should stay in the inner membrane). In Leptothrix cholodnii (strain ATCC 51168 / LMG 8142 / SP-6) (Leptothrix discophora (strain SP-6)), this protein is Outer-membrane lipoprotein carrier protein.